The chain runs to 486 residues: ATP synthase subunit beta (486 aa).

164–171 serves as a coordination point for ATP; sequence GGAGVGKT.

This sequence belongs to the ATPase alpha/beta chains family. As to quaternary structure, F-type ATPases have 2 components, CF(1) - the catalytic core - and CF(0) - the membrane proton channel. CF(1) has five subunits: alpha(3), beta(3), gamma(1), delta(1), epsilon(1). CF(0) has four main subunits: a(1), b(1), b'(1) and c(9-12).

The protein localises to the cellular thylakoid membrane. It catalyses the reaction ATP + H2O + 4 H(+)(in) = ADP + phosphate + 5 H(+)(out). Produces ATP from ADP in the presence of a proton gradient across the membrane. The catalytic sites are hosted primarily by the beta subunits. The polypeptide is ATP synthase subunit beta (Prochlorococcus marinus (strain MIT 9312)).